The following is a 61-amino-acid chain: Small ribosomal subunit protein uS14 (61 aa).

Zn(2+) contacts are provided by Cys24, Cys27, Cys40, and Cys43.

Belongs to the universal ribosomal protein uS14 family. Zinc-binding uS14 subfamily. As to quaternary structure, part of the 30S ribosomal subunit. Contacts proteins S3 and S10. It depends on Zn(2+) as a cofactor.

Binds 16S rRNA, required for the assembly of 30S particles and may also be responsible for determining the conformation of the 16S rRNA at the A site. This chain is Small ribosomal subunit protein uS14, found in Campylobacter jejuni subsp. jejuni serotype O:6 (strain 81116 / NCTC 11828).